We begin with the raw amino-acid sequence, 504 residues long: Glucose-6-phosphate isomerase (504 aa).

The active-site Proton donor is the E333. Catalysis depends on residues H364 and K473.

This sequence belongs to the GPI family.

Its subcellular location is the cytoplasm. The enzyme catalyses alpha-D-glucose 6-phosphate = beta-D-fructose 6-phosphate. It functions in the pathway carbohydrate biosynthesis; gluconeogenesis. The protein operates within carbohydrate degradation; glycolysis; D-glyceraldehyde 3-phosphate and glycerone phosphate from D-glucose: step 2/4. Functionally, catalyzes the reversible isomerization of glucose-6-phosphate to fructose-6-phosphate. The protein is Glucose-6-phosphate isomerase of Xanthomonas oryzae pv. oryzae (strain MAFF 311018).